Consider the following 212-residue polypeptide: Octanoyltransferase (212 aa).

Positions 31–209 (AETQDEIWLV…HFADLLGYNI (179 aa)) constitute a BPL/LPL catalytic domain. Residues 70-77 (RGGQITYH), 138-140 (SLG), and 151-153 (GLA) contribute to the substrate site. Catalysis depends on cysteine 169, which acts as the Acyl-thioester intermediate.

It belongs to the LipB family.

It is found in the cytoplasm. The catalysed reaction is octanoyl-[ACP] + L-lysyl-[protein] = N(6)-octanoyl-L-lysyl-[protein] + holo-[ACP] + H(+). The protein operates within protein modification; protein lipoylation via endogenous pathway; protein N(6)-(lipoyl)lysine from octanoyl-[acyl-carrier-protein]: step 1/2. Functionally, catalyzes the transfer of endogenously produced octanoic acid from octanoyl-acyl-carrier-protein onto the lipoyl domains of lipoate-dependent enzymes. Lipoyl-ACP can also act as a substrate although octanoyl-ACP is likely to be the physiological substrate. The sequence is that of Octanoyltransferase from Haemophilus influenzae (strain PittGG).